The following is a 236-amino-acid chain: Eukaryotic translation initiation factor 3 subunit K (236 aa).

The PCI domain maps to Tyr-42–Lys-222.

It belongs to the eIF-3 subunit K family. As to quaternary structure, component of the eukaryotic translation initiation factor 3 (eIF-3) complex.

Its subcellular location is the cytoplasm. In terms of biological role, component of the eukaryotic translation initiation factor 3 (eIF-3) complex, which is involved in protein synthesis of a specialized repertoire of mRNAs and, together with other initiation factors, stimulates binding of mRNA and methionyl-tRNAi to the 40S ribosome. The eIF-3 complex specifically targets and initiates translation of a subset of mRNAs involved in cell proliferation. The protein is Eukaryotic translation initiation factor 3 subunit K of Brugia malayi (Filarial nematode worm).